We begin with the raw amino-acid sequence, 584 residues long: uncharacterized protein (584 aa).

The span at 353–375 shows a compositional bias: polar residues; sequence NSEGQTNAETSLNGKGTVGNQWA. Disordered stretches follow at residues 353-379, 400-426, and 463-565; these read NSEG…SPPE, LESK…VSSH, and SVDS…CNSG. Polar residues predominate over residues 502–511; that stretch reads KANSPASSRL. Over residues 516 to 535 the composition is skewed to basic and acidic residues; the sequence is DSSHLSKHVNFDKNPDHSEA.

This is an uncharacterized protein from Mus musculus (Mouse).